The primary structure comprises 261 residues: Cytochrome c oxidase subunit 3 (261 aa).

Residues 1-15 (MTRQTHAYHMVNPSP) lie on the Mitochondrial matrix side of the membrane. The helical transmembrane segment at 16-34 (WPLTGALSALLMTSGLIMW) threads the bilayer. The Mitochondrial intermembrane portion of the chain corresponds to 35–40 (FHFNST). A helical transmembrane segment spans residues 41 to 66 (ILLMLGLTTNMLTMYQWWRDVIREST). The Mitochondrial matrix portion of the chain corresponds to 67-72 (FQGHHT). Residues 73–105 (PNVQKGLRYGMILFIISEVLFFTGFFWAFYHSS) traverse the membrane as a helical segment. Residues 106-128 (LAPTPELGGCWPPTGIHPLNPLE) lie on the Mitochondrial intermembrane side of the membrane. A helical membrane pass occupies residues 129–152 (VPLLNTSVLLASGVSITWAHHSLM). The Mitochondrial matrix portion of the chain corresponds to 153 to 155 (EGN). Residues 156–183 (RNHMLQALFITIALGVYFTLLQASEYYE) form a helical membrane-spanning segment. The Mitochondrial intermembrane portion of the chain corresponds to 184–190 (APFTISD). A helical transmembrane segment spans residues 191–223 (GVYGSTFFVATGFHGLHVIIGSTFLIVCFFRQL). The Mitochondrial matrix portion of the chain corresponds to 224-232 (KFHFTSNHH). The chain crosses the membrane as a helical span at residues 233-256 (FGFEAAAWYWHFVDVVWLFLYVSI). Residues 257-261 (YWWGS) lie on the Mitochondrial intermembrane side of the membrane.

The protein belongs to the cytochrome c oxidase subunit 3 family. As to quaternary structure, component of the cytochrome c oxidase (complex IV, CIV), a multisubunit enzyme composed of 14 subunits. The complex is composed of a catalytic core of 3 subunits MT-CO1, MT-CO2 and MT-CO3, encoded in the mitochondrial DNA, and 11 supernumerary subunits COX4I, COX5A, COX5B, COX6A, COX6B, COX6C, COX7A, COX7B, COX7C, COX8 and NDUFA4, which are encoded in the nuclear genome. The complex exists as a monomer or a dimer and forms supercomplexes (SCs) in the inner mitochondrial membrane with NADH-ubiquinone oxidoreductase (complex I, CI) and ubiquinol-cytochrome c oxidoreductase (cytochrome b-c1 complex, complex III, CIII), resulting in different assemblies (supercomplex SCI(1)III(2)IV(1) and megacomplex MCI(2)III(2)IV(2)).

It localises to the mitochondrion inner membrane. It carries out the reaction 4 Fe(II)-[cytochrome c] + O2 + 8 H(+)(in) = 4 Fe(III)-[cytochrome c] + 2 H2O + 4 H(+)(out). Component of the cytochrome c oxidase, the last enzyme in the mitochondrial electron transport chain which drives oxidative phosphorylation. The respiratory chain contains 3 multisubunit complexes succinate dehydrogenase (complex II, CII), ubiquinol-cytochrome c oxidoreductase (cytochrome b-c1 complex, complex III, CIII) and cytochrome c oxidase (complex IV, CIV), that cooperate to transfer electrons derived from NADH and succinate to molecular oxygen, creating an electrochemical gradient over the inner membrane that drives transmembrane transport and the ATP synthase. Cytochrome c oxidase is the component of the respiratory chain that catalyzes the reduction of oxygen to water. Electrons originating from reduced cytochrome c in the intermembrane space (IMS) are transferred via the dinuclear copper A center (CU(A)) of subunit 2 and heme A of subunit 1 to the active site in subunit 1, a binuclear center (BNC) formed by heme A3 and copper B (CU(B)). The BNC reduces molecular oxygen to 2 water molecules using 4 electrons from cytochrome c in the IMS and 4 protons from the mitochondrial matrix. In Eudorcas rufifrons (Red-fronted gazelle), this protein is Cytochrome c oxidase subunit 3 (MT-CO3).